A 145-amino-acid polypeptide reads, in one-letter code: Cell division protein SepF (145 aa).

Residues 21-41 are disordered; that stretch reads DKPQESTKAKEENVKPKHETP. A compositionally biased stretch (basic and acidic residues) spans 23–41; sequence PQESTKAKEENVKPKHETP.

Belongs to the SepF family. In terms of assembly, homodimer. Interacts with FtsZ.

The protein localises to the cytoplasm. Functionally, cell division protein that is part of the divisome complex and is recruited early to the Z-ring. Probably stimulates Z-ring formation, perhaps through the cross-linking of FtsZ protofilaments. Its function overlaps with FtsA. This is Cell division protein SepF from Caldicellulosiruptor saccharolyticus (strain ATCC 43494 / DSM 8903 / Tp8T 6331).